Consider the following 1250-residue polypeptide: Cell adhesion molecule-related/down-regulated by oncogenes (1250 aa).

The signal sequence occupies residues 1–24; the sequence is MHPDLGPLWTLLYVLVILCSSVSS. Topologically, residues 25-962 are extracellular; it reads DLAPYFISEP…SPARSSDMLY (938 aa). 5 Ig-like C2-type domains span residues 28–113, 119–203, 224–302, 309–395, and 404–515; these read PYFI…ATVS, DFDS…LKVE, PALS…KHVT, EHAS…GRLQ, and PVIV…AFLT. An intrachain disulfide couples Cys49 to Cys96. Residues Asn99, Asn179, Asn286, Asn293, Asn341, and Asn426 are each glycosylated (N-linked (GlcNAc...) asparagine). 2 disulfides stabilise this stretch: Cys140–Cys190 and Cys242–Cys289. Disulfide bonds link Cys332–Cys379 and Cys425–Cys499. Residues 524–534 are compositionally biased toward polar residues; sequence KAESVTPSEAS. A disordered region spans residues 524-547; it reads KAESVTPSEASQNDERDPQDGSES. N-linked (GlcNAc...) asparagine glycosylation occurs at Asn569. 3 Fibronectin type-III domains span residues 572–673, 719–814, and 822–922; these read VPDA…SKEK, APDR…VAGF, and PITG…TKVK. N-linked (GlcNAc...) asparagine glycosylation is present at Asn869. The tract at residues 929–951 is disordered; sequence DYPVKELSTPPSSSGNAGNVGPA. The chain crosses the membrane as a helical span at residues 963-983; the sequence is LIVGCVLGVMVLILMVFIALC. Residues 984 to 1250 lie on the Cytoplasmic side of the membrane; the sequence is LWKSRQQSTI…SVVLQQAQET (267 aa). Disordered stretches follow at residues 1178–1208 and 1223–1250; these read DNIS…AEDK and DCGE…AQET. A compositionally biased stretch (basic and acidic residues) spans 1193-1208; the sequence is EFSRGDSSGHSEAEDK.

In terms of assembly, part of a complex that contains BOC, CDON, NEO1, cadherins and CTNNB1. Interacts with NTN3. Interacts with DHH, IHH and SHH. Post-translationally, N-glycosylated. In terms of tissue distribution, highly expressed in somites and the dorsal lips of the neural tube during embryogenesis. Detected at very low levels in adult tissues.

Its subcellular location is the cell membrane. Functionally, component of a cell-surface receptor complex that mediates cell-cell interactions between muscle precursor cells. Promotes differentiation of myogenic cells. Required for response to NTN3 and activation of NFATC3. The sequence is that of Cell adhesion molecule-related/down-regulated by oncogenes (Cdon) from Mus musculus (Mouse).